A 76-amino-acid polypeptide reads, in one-letter code: Rhesus theta defensin-1/2 subunit B (76 aa).

The first 22 residues, 1 to 22 (MRTFALLTAMLLLVALHAQAEA), serve as a signal peptide directing secretion. A propeptide spanning residues 23-64 (RQARADEAAAQQQPGADDQGMAHSFTRPENAALPLSESARGL) is cleaved from the precursor. Residues 25 to 54 (ARADEAAAQQQPGADDQGMAHSFTRPENAA) form a disordered region. Low complexity predominate over residues 30–44 (AAAQQQPGADDQGMA). Arg65 is covalently cross-linked (Cyclopeptide (Arg-Cys) (interchain with C-73 in subunit A); in form RTD-1). A Cyclopeptide (Arg-Cys) (interchain with C-73 in subunit B); in form RTD-2 cross-link involves residue Arg65. Cys68 and Cys73 are oxidised to a cystine. Cys73 is covalently cross-linked (Cyclopeptide (Cys-Arg) (interchain with R-65 in subunit A); in form RTD-1). Residue Cys73 forms a Cyclopeptide (Cys-Arg) (interchain with R-65 in subunit B); in form RTD-2 linkage. The propeptide occupies 74–76 (QLL).

The protein belongs to the alpha-defensin family. Theta subfamily. RTD-1 is a cyclic heterodimer composed of subunits A and B; disulfide-linked. RTD-2 is a cyclic homodimer composed of two subunits B; disulfide-linked. Forms a cyclic peptide with 1 subunit B (RTD-2) or with 1 subunit A (RTD-1). An additional intersubunit disulfide bond is formed. As to expression, RTD-1 is expressed in bone marrow. Detected in promyelocytes, myelocytes and mature neutrophils and monocytes.

Its function is as follows. RTD-1 and RTD-2 have similar antimicrobial activities against the Gram-positive bacteria S.aureus 502A and L.monocytogenes, the Gram-negative bacterium S.typhimurium, and the fungi C.albicans 16820 and C.neoformans 271A. RTD-2 is 2-3-fold less active than RTD-1 against E.coli ML35. The sequence is that of Rhesus theta defensin-1/2 subunit B (RTD1B) from Macaca mulatta (Rhesus macaque).